Reading from the N-terminus, the 171-residue chain is 3-hydroxydecanoyl-[acyl-carrier-protein] dehydratase (171 aa).

Residue His70 is part of the active site.

Belongs to the thioester dehydratase family. FabA subfamily. In terms of assembly, homodimer.

Its subcellular location is the cytoplasm. The enzyme catalyses a (3R)-hydroxyacyl-[ACP] = a (2E)-enoyl-[ACP] + H2O. It catalyses the reaction (3R)-hydroxydecanoyl-[ACP] = (2E)-decenoyl-[ACP] + H2O. The catalysed reaction is (2E)-decenoyl-[ACP] = (3Z)-decenoyl-[ACP]. It participates in lipid metabolism; fatty acid biosynthesis. Functionally, necessary for the introduction of cis unsaturation into fatty acids. Catalyzes the dehydration of (3R)-3-hydroxydecanoyl-ACP to E-(2)-decenoyl-ACP and then its isomerization to Z-(3)-decenoyl-ACP. Can catalyze the dehydratase reaction for beta-hydroxyacyl-ACPs with saturated chain lengths up to 16:0, being most active on intermediate chain length. The chain is 3-hydroxydecanoyl-[acyl-carrier-protein] dehydratase from Pseudoalteromonas translucida (strain TAC 125).